Reading from the N-terminus, the 487-residue chain is MDDSTDDDSYHPRKHYAYDRQVSSSRWRTSREYIRGPGPETHTTESAQDGQDPPAGVYSYGYFSGSGNDPQVQGHFVPEIQKYNPYVIFKGEQLPVPIWELPEEKVQDFHDRYFIAKDKSRVEARKTLNRLLEGNINTIERGHGYKFNIPKYTDNMEFNEEVKVSLAKAGKTISRSFCNANQREVASRTGYTIDLIERTLGAGLNISKRTVLYTNKDLFGDQSKSDQAINDICALTNIRRGSLGIIAAEKGIVVGNIFLELTNGKSISCSIGVQIPHRLDQIKDVCVEIGSRNIEYILVVEKHTMLNYLLEMDYHTNNNCIILTGCGMPTLQTRDFLRFLKQRTGLPVFGLCDPDPEGISILATYARGSCNSAYDNFNISVPSICWVGLSSSDMIKLNLSETNYSRLSREDKTMLKNLWQDDLSDVWKRRIEEMISFDKKASFEAIHSLGFDYFATNLLPDMINKVREGYVQVQEKKEPQDTEASED.

Residues 1–56 form a disordered region; it reads MDDSTDDDSYHPRKHYAYDRQVSSSRWRTSREYIRGPGPETHTTESAQDGQDPPAG. The region spanning 119–252 is the Topo IIA-type catalytic domain; that stretch reads KSRVEARKTL…LGIIAAEKGI (134 aa). Tyr-213 functions as the O-(5'-phospho-DNA)-tyrosine intermediate in the catalytic mechanism. Residues Glu-301 and Asp-353 each contribute to the Mg(2+) site.

It belongs to the TOP6A family. Homodimer. Interacts with TOP6B. Mg(2+) serves as cofactor.

Its subcellular location is the nucleus. The catalysed reaction is ATP-dependent breakage, passage and rejoining of double-stranded DNA.. Its function is as follows. Required for meiotic recombination. Mediates DNA cleavage that forms the double-strand breaks (DSB) that initiate meiotic recombination. Possesses double-stranded DNA cleavage activity in vitro. The sequence is that of Meiotic recombination protein SPO11-4 (SPO11-4) from Oryza sativa subsp. japonica (Rice).